Reading from the N-terminus, the 394-residue chain is MNRIAADVQRAFENAGEKTLPIKVEEIVLGKQAADSLLDYVKRKNNQHIVLVCDANTHRIAGIDLENRLNQEGFQAECLIIPENEAGDVTADERSLIHVLIHTKQPTDVMIAVGSGTIHDIVRFAAFQRDLPFISYPTAPSVDGFTSAGAPIILYGTKTTIQTKAPSALFADLDLLKAAPQSMVAAGFGDMLGKITSLADWEISRHLAGEPYSPAGAKIVQEALAACIEHTEDIAMKTETGIRVLMESLLVSGLVMLALDHSRPASGGEHHISHWIEMELMEKKRPQILHGAKVGCAAVLLTDTYRKLAQDDGLNEFSPSRREAIQSAYQTLPRGEVLADWLRSAGGPAYFDEIGVGQDSVKNAFRHAHTLRDRCTGLRIINENKTLINHGLYE.

NAD(+) contacts are provided by residues aspartate 54, 116–120 (GTIHD), and 138–141 (TAPS). Position 143 (aspartate 143) interacts with substrate. NAD(+) is bound at residue serine 147. Substrate is bound at residue aspartate 190. Ni(2+) is bound by residues aspartate 190 and histidine 270. Histidine 274 lines the substrate pocket. Histidine 290 is a binding site for Ni(2+).

It belongs to the glycerol-1-phosphate dehydrogenase family. In terms of assembly, homodimer. Ni(2+) serves as cofactor.

It localises to the cytoplasm. The enzyme catalyses sn-glycerol 1-phosphate + NAD(+) = dihydroxyacetone phosphate + NADH + H(+). It carries out the reaction sn-glycerol 1-phosphate + NADP(+) = dihydroxyacetone phosphate + NADPH + H(+). Catalyzes the NAD(P)H-dependent reduction of dihydroxyacetonephosphate (DHAP or glycerone phosphate) to glycerol 1-phosphate (G1P). The G1P thus generated is probably used for the synthesis of phosphoglycerolipids in Gram-positive bacterial species. Prefers NADH over NADPH as coenzyme. Is also able to catalyze the reverse reaction, i.e. the NAD(+)-dependent oxidation of G1P but not of G3P. Does not possess glycerol dehydrogenase activity. The protein is Glycerol-1-phosphate dehydrogenase [NAD(P)+] (egsA) of Bacillus subtilis (strain 168).